Here is an 822-residue protein sequence, read N- to C-terminus: Sodium/hydrogen exchanger 1 (822 aa).

Topologically, residues 1 to 102 are extracellular; that stretch reads MMLRWSGIWG…FPVLDIDYLH (102 aa). Residues 41-73 are disordered; the sequence is SPTANTIRGAEPPRERSIGDVTTAPSEPVHHPD. A helical transmembrane segment spans residues 103 to 125; it reads VRTPFEISLWILLACLMKIGFHV. The Cytoplasmic portion of the chain corresponds to 126-134; that stretch reads IPTISSIVP. A helical transmembrane segment spans residues 135-152; the sequence is ESCLLIVVGLLVGGLIKG. Residues 153–162 lie on the Extracellular side of the membrane; the sequence is VGETPPFLQS. A helical membrane pass occupies residues 163-180; sequence DVFFLFLLPPIILDAGYF. Topologically, residues 181 to 190 are cytoplasmic; the sequence is LPLRQFTENL. A helical transmembrane segment spans residues 191–219; that stretch reads GTILIFAVVGTLWNAFFLGGLLYAVCLVG. Over 220–226 the chain is Extracellular; it reads GEQINNI. The chain crosses the membrane as a helical span at residues 227-253; it reads GLLDTLLFGSIISAVDPVAVVAVFEEI. The Cytoplasmic portion of the chain corresponds to 254 to 256; sequence HIN. A helical membrane pass occupies residues 257-287; that stretch reads ELLHILVFGESLLNDAVTVVLYHLFEEFANY. Residues 288-291 lie on the Extracellular side of the membrane; sequence DSIG. A helical membrane pass occupies residues 292-326; that stretch reads ISDIFLGFLSFFVVALGGVFVGVVYGVIAAFTSRF. Residues 327–332 lie on the Cytoplasmic side of the membrane; it reads TSHIRV. The helical transmembrane segment at 333–345 threads the bilayer; that stretch reads IEPLFVFLYSYMA. Residues 346–354 lie on the Extracellular side of the membrane; the sequence is YLSAELFHL. Residues 355–375 traverse the membrane as a helical segment; the sequence is SGIMALIASGVVMRPYVEANI. The Cytoplasmic segment spans residues 376–377; that stretch reads SH. Residues 378–408 traverse the membrane as a helical segment; it reads KSHTTIKYFLKMWSSVSETLIFIFLGVSTVA. The Extracellular segment spans residues 409 to 414; it reads GSHQWN. Residues 415–442 traverse the membrane as a helical segment; sequence WTFVISTLLFCLIARVLGVLVLTWFINK. The Cytoplasmic portion of the chain corresponds to 443–448; it reads FRIVKL. The helical transmembrane segment at 449–473 threads the bilayer; sequence TPKDQFIIAYGGLRGAIAFSLGYLM. Topologically, residues 474–479 are extracellular; the sequence is DKKHFP. Residues 480–509 traverse the membrane as a helical segment; sequence MCDLFLTAIITVIFFTVFVQGMTIRPLVDL. An interaction with TESC region spans residues 507–549; it reads VDLLAVKKKQETKRSINEEIHTQFLDHLLTGIEDICGHYGHHH. Residues 510 to 822 are Cytoplasmic-facing; sequence LAVKKKQETK…EGEPFIPKGE (313 aa). A PI(4,5)P2-binding region region spans residues 513–520; it reads KKKQETKR. Residues 519 to 549 form an interaction with CHP2 region; it reads KRSINEEIHTQFLDHLLTGIEDICGHYGHHH. Positions 544-549 are confers pH-dependent PI(4,5)P2 binding; it reads HYGHHH. The PI(4,5)P2-binding region stretch occupies residues 556–564; sequence RFNKKYVKK. Phosphoserine occurs at positions 603 and 606. Thr607 carries the phosphothreonine modification. Ser609 and Ser652 each carry phosphoserine. The interaction with TESC stretch occupies residues 637 to 822; sequence KILRSNLQKT…EGEPFIPKGE (186 aa). The tract at residues 637-822 is interaction with CALM1; the sequence is KILRSNLQKT…EGEPFIPKGE (186 aa). Positions 688–691 are interaction with PPP3CA; it reads LTVP. Ser697, Ser701, and Ser707 each carry phosphoserine. The interaction with PPP3CA stretch occupies residues 719 to 724; sequence PVITID. Residues Ser727, Ser730, and Ser733 each carry the phosphoserine modification. The interval 752 to 822 is disordered; sequence PTRLTRGEED…EGEPFIPKGE (71 aa). The residue at position 756 (Thr756) is a Phosphothreonine. The segment covering 759–768 has biased composition (acidic residues); the sequence is EEDEDEDEDG. Thr786 bears the Phosphothreonine mark. Ser792, Ser794, and Ser803 each carry phosphoserine.

It belongs to the monovalent cation:proton antiporter 1 (CPA1) transporter (TC 2.A.36) family. As to quaternary structure, homodimer; dimerization is crucial for its function. Oligomer. Interacts with CALM in a calcium-dependent manner. Interacts with TESC. Interacts (via the juxtamembrane region of the cytoplasmic C-terminal domain) with CHP1; the interaction occurs at the plasma membrane in a calcium-dependent manner. Interacts with CHP2; the interaction occurs in a calcium-dependent manner. Interacts with EZR; regulates the cytoskeletal interactions of SLC9A1 and promotes stress fiber formation. Ubiquitinated, leading to its degradation by the proteasome. Ubiquitination is reduced by CHP1. Post-translationally, O-glycosylated. In terms of processing, palmitoylated; may play a major role in SLC9A1 regulation. Phosphorylation at Thr-786 increases SLC9A1 activity. Specifically dephosphorylated at Thr-786 by PPP3CA that negatively regulates SLC9A1 activity. Phosphorylation at Ser-652 by AKT1 reduces SLC9A1 binding to CALM1.

It localises to the cell membrane. Its subcellular location is the basolateral cell membrane. The enzyme catalyses Na(+)(in) + H(+)(out) = Na(+)(out) + H(+)(in). The catalysed reaction is Li(+)(out) + H(+)(in) = Li(+)(in) + H(+)(out). It catalyses the reaction Li(+)(in) + Na(+)(out) = Li(+)(out) + Na(+)(in). Activated at acidic pHs. Inhibited by amiloride and 5-amino-substituted derivatives. Inhibited by cariporide and eniporide. Phosphatidylinositol 4,5-bisphosphate (PI(4,5)P2) and phosphatidylinositol 3,4,5-trisphosphate (PI(3,4,5)P3) bind and differentially regulate SLC9A1 activity. Functionally, electroneutral Na(+) /H(+) antiporter that extrudes Na(+) in exchange for external protons driven by the inward sodium ion chemical gradient, protecting cells from acidification that occurs from metabolism. Exchanges intracellular H(+) ions for extracellular Na(+) in 1:1 stoichiometry. Plays a key role in maintening intracellular pH neutral and cell volume, and thus is important for cell growth, proliferation, migration and survival. In addition, can transport lithium Li(+) and also functions as a Na(+)/Li(+) antiporter. SLC9A1 also functions in membrane anchoring and organization of scaffolding complexes that coordinate signaling inputs. This Cricetulus griseus (Chinese hamster) protein is Sodium/hydrogen exchanger 1 (SLC9A1).